A 249-amino-acid polypeptide reads, in one-letter code: Gamma-glutamyl peptidase 3 (249 aa).

One can recognise a Glutamine amidotransferase type-1 domain in the interval 19–217 (SEFVKKTYGG…VDRVLNMKLM (199 aa)). Catalysis depends on Cys103, which acts as the Nucleophile. Catalysis depends on residues His196 and Glu198.

The protein belongs to the peptidase C26 family.

Its subcellular location is the cytoplasm. It localises to the cytosol. It carries out the reaction an S-[(1E)-1-(hydroxyimino)-omega-(methylsulfanyl)alkyl]-L-glutathione + H2O = an S-[(1E)-1-(hydroxyimino)-omega-(methylsulfanyl)alkyl]-L-cysteinylglycine + L-glutamate. The catalysed reaction is (E)-1-(glutathione-S-yl)-2-(1H-indol-3-yl)acetohydroximate + H2O = (E)-1-(glycyl-L-cystein-S-yl)-2-(1H-indol-3-yl)acetohydroximate + L-glutamate. It catalyses the reaction 2-(glutathion-S-yl)-2-(1H-indol-3-yl)acetonitrile + H2O = 2-(glycyl-L-cystein-S-yl)-2-(1H-indol-3-yl)acetonitrile + L-glutamate. The enzyme catalyses (Z)-1-(glutathione-S-yl)-2-phenylacetohydroximate + H2O = (Z)-1-(glycyl-L-cystein-S-yl)-2-phenylacetohydroximate + L-glutamate. Its pathway is secondary metabolite biosynthesis. In terms of biological role, involved in glucosinolate biosynthesis. Hydrolyzes the gamma-glutamyl peptide bond of several glutathione (GSH) conjugates to produce Cys-Gly conjugates related to glucosinolates. The gamma-Glu-Cys-Gly-GSH conjugates are the sulfur-donating molecule in glucosinolate biosynthesis. Can use the GSH conjugate of the camalexin intermediate IAN (GS-IAN) as substrate. Required for the biosynthesis of camalexin, a pathogen-inducible phytoalexin with antibacterial and antifungal properties. The polypeptide is Gamma-glutamyl peptidase 3 (Arabidopsis thaliana (Mouse-ear cress)).